The following is a 134-amino-acid chain: Protein NrdI (134 aa).

Belongs to the NrdI family.

Functionally, probably involved in ribonucleotide reductase function. The protein is Protein NrdI of Yersinia enterocolitica serotype O:8 / biotype 1B (strain NCTC 13174 / 8081).